The chain runs to 348 residues: Lysophosphatidic acid receptor 2 (348 aa).

Residues 1-30 (MGQCYYNETIGFFYNNSGKELSSHWRPKDV) are Extracellular-facing. Residues N7 and N15 are each glycosylated (N-linked (GlcNAc...) asparagine). A helical transmembrane segment spans residues 31–51 (VVVALGLTVSVLVLLTNLLVI). The Cytoplasmic portion of the chain corresponds to 52–66 (AAIASNRRFHQPIYY). Residues 67–87 (LLGNLAAADLFAGVAYLFLMF) traverse the membrane as a helical segment. Topologically, residues 88-100 (HTGPRTARLSLEG) are extracellular. Residues 101 to 123 (WFLRQGLLDTSLTASVATLLAIA) traverse the membrane as a helical segment. The Cytoplasmic segment spans residues 124–143 (VERHRSVMAVQLHSRLPRGR). The helical transmembrane segment at 144-164 (VVMLIVGVWVAALGLGLLPAH) threads the bilayer. The Extracellular segment spans residues 165–185 (SWHCLCALDRCSRMAPLLSRS). The chain crosses the membrane as a helical span at residues 186 to 206 (YLAVWALSSLLVFLLMVAVYT). Over 207 to 239 (RIFFYVRRRVQRMAEHVSCHPRYRETTLSLVKT) the chain is Cytoplasmic. Residues 240-260 (VVIILGAFVVCWTPGQVVLLL) form a helical membrane-spanning segment. At 261–276 (DGLGCESCNVLAVEKY) the chain is on the extracellular side. Residues 277–294 (FLLLAEANSLVNAAVYSC) traverse the membrane as a helical segment. Over 295–348 (RDAEMRRTFRRLLCCACLRQSTRESVHYTSSAQGGASTRIMLPENGHPLMDSTL) the chain is Cytoplasmic. A lipid anchor (S-palmitoyl cysteine) is attached at C308. Positions 345-348 (DSTL) match the PDZ-binding motif.

Belongs to the G-protein coupled receptor 1 family. Interacts with SLC9A3R2/NHERF2, MAGI3 and PLCB3. Interacts with RALA and GRK2. Expressed most abundantly in testes and peripheral blood leukocytes with less expression in pancreas, spleen, thymus and prostate. Little or no expression in heart, brain, placenta, lung, liver, skeletal muscle, kidney, ovary, small intestine, or colon.

The protein localises to the cell surface. It is found in the cell membrane. Functionally, receptor for lysophosphatidic acid (LPA), a mediator of diverse cellular activities. Seems to be coupled to the G(i)/G(o), G(12)/G(13), and G(q) families of heteromeric G proteins. Plays a key role in phospholipase C-beta (PLC-beta) signaling pathway. Stimulates phospholipase C (PLC) activity in a manner that is independent of RALA activation. The chain is Lysophosphatidic acid receptor 2 from Homo sapiens (Human).